Consider the following 101-residue polypeptide: DNA-directed RNA polymerase subunit beta (101 aa).

Residues 74 to 101 (KRRLSALGPGGLSRERAGLEVRDVHSSH) form a disordered region. The span at 86-101 (SRERAGLEVRDVHSSH) shows a compositional bias: basic and acidic residues.

The protein belongs to the RNA polymerase beta chain family. As to quaternary structure, the RNAP catalytic core consists of 2 alpha, 1 beta, 1 beta' and 1 omega subunit. When a sigma factor is associated with the core the holoenzyme is formed, which can initiate transcription.

The catalysed reaction is RNA(n) + a ribonucleoside 5'-triphosphate = RNA(n+1) + diphosphate. In terms of biological role, DNA-dependent RNA polymerase catalyzes the transcription of DNA into RNA using the four ribonucleoside triphosphates as substrates. The sequence is that of DNA-directed RNA polymerase subunit beta (rpoB) from Mycolicibacterium peregrinum (Mycobacterium peregrinum).